The primary structure comprises 196 residues: Small ribosomal subunit protein uS4c (196 aa).

Residues 16 to 36 (GTLPGLTSKRPKSGSDLKTQL) form a disordered region. The S4 RNA-binding domain maps to 89–150 (MRLDNILFRL…KQRSKALIQN (62 aa)).

Belongs to the universal ribosomal protein uS4 family. In terms of assembly, part of the 30S ribosomal subunit. Contacts protein S5. The interaction surface between S4 and S5 is involved in control of translational fidelity.

The protein localises to the plastid. It localises to the chloroplast. In terms of biological role, one of the primary rRNA binding proteins, it binds directly to 16S rRNA where it nucleates assembly of the body of the 30S subunit. Its function is as follows. With S5 and S12 plays an important role in translational accuracy. The sequence is that of Small ribosomal subunit protein uS4c (rps4) from Rhapis humilis (Slender lady palm).